Here is a 335-residue protein sequence, read N- to C-terminus: Probable UDP-N-acetylglucosamine pyrophosphorylase (335 aa).

Positions 45-48 match the Substrate binding motif; sequence LSGG. UTP is bound by residues 45–48, Lys-59, Gln-120, and Gly-145; that span reads LSGG. Asn-146 lines the substrate pocket. Residue Asp-170 coordinates UTP. Residues 218–219 carry the Substrate binding motif; the sequence is EY. UTP is bound at residue Lys-278. Residue Lys-308 participates in substrate binding.

It belongs to the UDPGP type 1 family.

The protein localises to the cytoplasm. The enzyme catalyses N-acetyl-alpha-D-glucosamine 1-phosphate + UTP + H(+) = UDP-N-acetyl-alpha-D-glucosamine + diphosphate. Its pathway is nucleotide-sugar biosynthesis; UDP-N-acetyl-alpha-D-glucosamine biosynthesis; UDP-N-acetyl-alpha-D-glucosamine from N-acetyl-alpha-D-glucosamine 1-phosphate: step 1/1. The chain is Probable UDP-N-acetylglucosamine pyrophosphorylase (UAP1) from Encephalitozoon cuniculi (strain GB-M1) (Microsporidian parasite).